Here is a 600-residue protein sequence, read N- to C-terminus: Adenine deaminase (600 aa).

Belongs to the metallo-dependent hydrolases superfamily. Adenine deaminase family. The cofactor is Mn(2+).

The enzyme catalyses adenine + H2O + H(+) = hypoxanthine + NH4(+). The sequence is that of Adenine deaminase from Bradyrhizobium sp. (strain BTAi1 / ATCC BAA-1182).